The primary structure comprises 146 residues: Ribonuclease H (146 aa).

Residues 1–136 (MKHIEIYTDG…CDTLAREAAL (136 aa)) form the RNase H type-1 domain. Mg(2+)-binding residues include D9, E47, D69, and D128.

Belongs to the RNase H family. In terms of assembly, monomer. Mg(2+) is required as a cofactor.

The protein localises to the cytoplasm. It catalyses the reaction Endonucleolytic cleavage to 5'-phosphomonoester.. In terms of biological role, endonuclease that specifically degrades the RNA of RNA-DNA hybrids. The chain is Ribonuclease H from Campylobacter jejuni subsp. jejuni serotype O:23/36 (strain 81-176).